The chain runs to 153 residues: Large ribosomal subunit protein uL22 (153 aa).

Belongs to the universal ribosomal protein uL22 family. As to quaternary structure, part of the 50S ribosomal subunit.

Its function is as follows. This protein binds specifically to 23S rRNA. It makes multiple contacts with different domains of the 23S rRNA in the assembled 50S subunit and ribosome. In terms of biological role, the globular domain of the protein is located near the polypeptide exit tunnel on the outside of the subunit, while an extended beta-hairpin is found that lines the wall of the exit tunnel in the center of the 70S ribosome. This Methanococcus maripaludis (strain C5 / ATCC BAA-1333) protein is Large ribosomal subunit protein uL22.